Consider the following 203-residue polypeptide: Probable proteasome subunit beta type-4 (203 aa).

The protein belongs to the peptidase T1B family. In terms of assembly, the 26S proteasome consists of a 20S proteasome core and two 19S regulatory subunits. The 20S proteasome core is composed of 28 subunits that are arranged in four stacked rings, resulting in a barrel-shaped structure. The two end rings are each formed by seven alpha subunits, and the two central rings are each formed by seven beta subunits. The catalytic chamber with the active sites is on the inside of the barrel.

It is found in the cytoplasm. The protein localises to the nucleus. In terms of biological role, non-catalytic component of the proteasome, a multicatalytic proteinase complex which is characterized by its ability to cleave peptides with Arg, Phe, Tyr, Leu, and Glu adjacent to the leaving group at neutral or slightly basic pH. The proteasome has an ATP-dependent proteolytic activity. This Neurospora crassa (strain ATCC 24698 / 74-OR23-1A / CBS 708.71 / DSM 1257 / FGSC 987) protein is Probable proteasome subunit beta type-4 (pcb-4).